A 156-amino-acid chain; its full sequence is Transcriptional repressor NrdR (156 aa).

Residues 3-34 (CPYCGHLEDRVVDSRETQDGQATRRRRACLSC) fold into a zinc finger. An ATP-cone domain is found at 49 to 139 (PQVVKKDGRR…VYRAFRDVGE (91 aa)).

The protein belongs to the NrdR family. Zn(2+) serves as cofactor.

Negatively regulates transcription of bacterial ribonucleotide reductase nrd genes and operons by binding to NrdR-boxes. This is Transcriptional repressor NrdR from Anaeromyxobacter dehalogenans (strain 2CP-C).